Here is a 632-residue protein sequence, read N- to C-terminus: ATP-dependent zinc metalloprotease FtsH (632 aa).

Topologically, residues 1–9 (MKPTNEPKK) are cytoplasmic. Residues 10–30 (PFFQSPIVLAVLGGILLIFFL) traverse the membrane as a helical segment. Topologically, residues 31-116 (RSFNSDGSFS…INYSGFSESN (86 aa)) are periplasmic. A helical membrane pass occupies residues 117-137 (FFTDMLGWLMPILVILGLWMF). At 138-632 (MANRMQKNMG…RLIPLEEQAS (495 aa)) the chain is on the cytoplasmic side. An ATP-binding site is contributed by 210–217 (GPPGTGKT). His434 provides a ligand contact to Zn(2+). Residue Glu435 is part of the active site. Positions 438 and 511 each coordinate Zn(2+).

It in the central section; belongs to the AAA ATPase family. In the C-terminal section; belongs to the peptidase M41 family. In terms of assembly, homohexamer. Zn(2+) is required as a cofactor.

It localises to the cell inner membrane. Its function is as follows. Acts as a processive, ATP-dependent zinc metallopeptidase for both cytoplasmic and membrane proteins. Plays a role in the quality control of integral membrane proteins. The protein is ATP-dependent zinc metalloprotease FtsH of Helicobacter pylori (strain J99 / ATCC 700824) (Campylobacter pylori J99).